Reading from the N-terminus, the 502-residue chain is MEEIQGYLQPERSQQHNFLYPLLFQESIYALAHDRGLNRSISFKNTGYEKKLSFQIVKRLITRIYQRIYFTTYSSNKSQIFGPNKSLYSKLLSEGFAFIVEIPFSLRFILERKKILKSQNLRSIHSIFPFLEDNFSHLNYVLDILIPYPPHLEILVQTLHYWVKDASSLHLLRFFLHEYCNFNIFITPKRSRSPFSKINQRFFFFLYNSYVCEYESIFLFLRNQSLHLRSTSFGALFERNIFYGKIECFVKVFAKDFKANLCLLKDADLSMHYFRYRGKSILASKGTLLLMSKWNYYFVNFWQCSFCLWFHTERIYISQLSSHSLDFMGYLSSIPLTPSTVRSQMLENSFLINNAIKKFDTIVPIIPIIGSLAKAKFCNVLGNPISKPVWADLSDSDIIERFGHIYRNFFHYYSGSSKKRSLYRIKYILRLSCARTLARKHKSTVRAFLQSLGSEFLEEFFTSEEQILSFTFPNASSTLRGVYKRRIWYFDIVCINELANYQ.

The protein belongs to the intron maturase 2 family. MatK subfamily.

It localises to the plastid. The protein resides in the chloroplast. Usually encoded in the trnK tRNA gene intron. Probably assists in splicing its own and other chloroplast group II introns. The polypeptide is Maturase K (Ipomoea purpurea (Common morning glory)).